A 596-amino-acid chain; its full sequence is Aspartate--tRNA(Asp/Asn) ligase (596 aa).

Residue E169 coordinates L-aspartate. Positions Q193–K196 are aspartate. Position 215 (R215) interacts with L-aspartate. ATP-binding positions include R215–E217 and Q224. Residue H447 participates in L-aspartate binding. Residue E481 participates in ATP binding. R488 is a binding site for L-aspartate. G533–R536 lines the ATP pocket. Residues G559 to A596 form a disordered region. Over residues Q574–D590 the composition is skewed to basic and acidic residues.

The protein belongs to the class-II aminoacyl-tRNA synthetase family. Type 1 subfamily. In terms of assembly, homodimer.

Its subcellular location is the cytoplasm. It carries out the reaction tRNA(Asx) + L-aspartate + ATP = L-aspartyl-tRNA(Asx) + AMP + diphosphate. Aspartyl-tRNA synthetase with relaxed tRNA specificity since it is able to aspartylate not only its cognate tRNA(Asp) but also tRNA(Asn). Reaction proceeds in two steps: L-aspartate is first activated by ATP to form Asp-AMP and then transferred to the acceptor end of tRNA(Asp/Asn). This is Aspartate--tRNA(Asp/Asn) ligase from Arthrobacter sp. (strain FB24).